A 336-amino-acid chain; its full sequence is Aspartate--ammonia ligase (336 aa).

It belongs to the class-II aminoacyl-tRNA synthetase family. AsnA subfamily.

It is found in the cytoplasm. The enzyme catalyses L-aspartate + NH4(+) + ATP = L-asparagine + AMP + diphosphate + H(+). The protein operates within amino-acid biosynthesis; L-asparagine biosynthesis; L-asparagine from L-aspartate (ammonia route): step 1/1. This is Aspartate--ammonia ligase from Lactobacillus acidophilus (strain ATCC 700396 / NCK56 / N2 / NCFM).